A 147-amino-acid chain; its full sequence is Large ribosomal subunit protein uL13 (147 aa).

This sequence belongs to the universal ribosomal protein uL13 family. In terms of assembly, part of the 50S ribosomal subunit.

Its function is as follows. This protein is one of the early assembly proteins of the 50S ribosomal subunit, although it is not seen to bind rRNA by itself. It is important during the early stages of 50S assembly. The chain is Large ribosomal subunit protein uL13 from Kineococcus radiotolerans (strain ATCC BAA-149 / DSM 14245 / SRS30216).